The following is a 686-amino-acid chain: MSDDQNKRVNEHSKDEQLEQYRTDNSGKKMTTNQGLRVSEDEHSLKAGVRGPTLMEDFHFREKMTHFDHERIPERVVHARGFGVHGFFQVYEPMTEYTRAKFLQDPSVKTPVFVRFSTVAGSKGSADTVRDARGFATKFYTEEGNYDLVGNNIPVFFIQDAIKFPDLVHAFKPEPHNEMPQAATAHDTFWDFVANNPESAHMVMWTMSDRGIPRSYRMMEGFGVHTFRFVNEQGKARFVKFHWKPVLGVHSLVWDEAQKIAGKDPDFHRRDLWETIENGGKVEYELGVQMIDEEDEFKFDFDILDPTKLWPEELVPVKIIGKMTLNRNQDNVFAETEQVAFHPGNVVPGIDFTNDPLLQGRLFSYTDTQLIRLGGPNFHEIPINRPVCPFHNNQYDGYHRMTINKGPVAYHKNSLQNNDPSPATAEEGGYVHYQEKVEGKKIRQRSDSFNDYYSQAKLFWNSMSPVEKQHIISAFCFEVGKVKSKDVQRQVVDVFSNVDADLAEEIAKGVGVAAPAKRKASKEILTSPALSQARTVKTASTRKVAVLAGNGFHEKELQTVLEALKQEGITVDIISQNLGYMTSGSGQQLEASGTFLTVDSVLYDAVYAAGGLELKDNKQAMAFIREAYNHYKAIGAANEGIDLLQSSVGTTEGLGIVTAKDEPDYTAFSKAFIDAVAAHRHWDRRI.

Basic and acidic residues predominate over residues 1 to 27; it reads MSDDQNKRVNEHSKDEQLEQYRTDNSG. Residues 1–43 form a disordered region; the sequence is MSDDQNKRVNEHSKDEQLEQYRTDNSGKKMTTNQGLRVSEDEH. Catalysis depends on residues histidine 78 and asparagine 151. Residue tyrosine 365 participates in heme binding.

It belongs to the catalase family. HPII subfamily. Requires heme as cofactor.

It carries out the reaction 2 H2O2 = O2 + 2 H2O. Decomposes hydrogen peroxide into water and oxygen; serves to protect cells from the toxic effects of hydrogen peroxide. Involved in sporulation. This Bacillus subtilis (strain 168) protein is Catalase-2 (katE).